A 214-amino-acid chain; its full sequence is Urease accessory protein UreF (214 aa).

Belongs to the UreF family. As to quaternary structure, ureD, UreF and UreG form a complex that acts as a GTP-hydrolysis-dependent molecular chaperone, activating the urease apoprotein by helping to assemble the nickel containing metallocenter of UreC. The UreE protein probably delivers the nickel.

It is found in the cytoplasm. Its function is as follows. Required for maturation of urease via the functional incorporation of the urease nickel metallocenter. This chain is Urease accessory protein UreF, found in Ruegeria sp. (strain TM1040) (Silicibacter sp.).